Reading from the N-terminus, the 387-residue chain is Eukaryotic translation initiation factor 3 subunit M (387 aa).

The 160-residue stretch at 181–340 (LSSKVMIELL…RKVHISSTMH (160 aa)) folds into the PCI domain.

The protein belongs to the eIF-3 subunit M family. As to quaternary structure, component of the eukaryotic translation initiation factor 3 (eIF-3) complex. The eIF-3 complex interacts with pix.

It is found in the cytoplasm. The protein resides in the golgi apparatus. Functionally, component of the eukaryotic translation initiation factor 3 (eIF-3) complex, which is involved in protein synthesis of a specialized repertoire of mRNAs and, together with other initiation factors, stimulates binding of mRNA and methionyl-tRNAi to the 40S ribosome. The eIF-3 complex specifically targets and initiates translation of a subset of mRNAs involved in cell proliferation. In Drosophila pseudoobscura pseudoobscura (Fruit fly), this protein is Eukaryotic translation initiation factor 3 subunit M.